The following is a 353-amino-acid chain: Photosystem II D2 protein (353 aa).

At Thr2 the chain carries N-acetylthreonine. Thr2 bears the Phosphothreonine mark. Residues 41–61 (CAYFALGGWFTGTTFVTSWYT) form a helical membrane-spanning segment. His118 is a chlorophyll a binding site. A helical membrane pass occupies residues 125 to 141 (GFMLRQFELARSVQLRP). Pheophytin a is bound by residues Gln130 and Asn143. A helical membrane pass occupies residues 153–166 (VFVSVFLIYPLGQS). His198 is a binding site for chlorophyll a. A helical transmembrane segment spans residues 208–228 (AALLCAIHGATVENTLFEDGD). 2 residues coordinate a plastoquinone: His215 and Phe262. His215 lines the Fe cation pocket. His269 lines the Fe cation pocket. The chain crosses the membrane as a helical span at residues 279–295 (GLWMSALGVVGLALNLR).

Belongs to the reaction center PufL/M/PsbA/D family. PSII is composed of 1 copy each of membrane proteins PsbA, PsbB, PsbC, PsbD, PsbE, PsbF, PsbH, PsbI, PsbJ, PsbK, PsbL, PsbM, PsbT, PsbX, PsbY, PsbZ, Psb30/Ycf12, at least 3 peripheral proteins of the oxygen-evolving complex and a large number of cofactors. It forms dimeric complexes. Requires The D1/D2 heterodimer binds P680, chlorophylls that are the primary electron donor of PSII, and subsequent electron acceptors. It shares a non-heme iron and each subunit binds pheophytin, quinone, additional chlorophylls, carotenoids and lipids. There is also a Cl(-1) ion associated with D1 and D2, which is required for oxygen evolution. The PSII complex binds additional chlorophylls, carotenoids and specific lipids. as cofactor.

The protein resides in the plastid. Its subcellular location is the chloroplast thylakoid membrane. It catalyses the reaction 2 a plastoquinone + 4 hnu + 2 H2O = 2 a plastoquinol + O2. In terms of biological role, photosystem II (PSII) is a light-driven water:plastoquinone oxidoreductase that uses light energy to abstract electrons from H(2)O, generating O(2) and a proton gradient subsequently used for ATP formation. It consists of a core antenna complex that captures photons, and an electron transfer chain that converts photonic excitation into a charge separation. The D1/D2 (PsbA/PsbD) reaction center heterodimer binds P680, the primary electron donor of PSII as well as several subsequent electron acceptors. D2 is needed for assembly of a stable PSII complex. The chain is Photosystem II D2 protein from Populus trichocarpa (Western balsam poplar).